The following is a 189-amino-acid chain: ATP synthase subunit b 1 (189 aa).

A helical membrane pass occupies residues 32–52; it reads TYFASQLFWLTIAFVILYIAL.

This sequence belongs to the ATPase B chain family. F-type ATPases have 2 components, F(1) - the catalytic core - and F(0) - the membrane proton channel. F(1) has five subunits: alpha(3), beta(3), gamma(1), delta(1), epsilon(1). F(0) has three main subunits: a(1), b(2) and c(10-14). The alpha and beta chains form an alternating ring which encloses part of the gamma chain. F(1) is attached to F(0) by a central stalk formed by the gamma and epsilon chains, while a peripheral stalk is formed by the delta and b chains.

Its subcellular location is the cell inner membrane. F(1)F(0) ATP synthase produces ATP from ADP in the presence of a proton or sodium gradient. F-type ATPases consist of two structural domains, F(1) containing the extramembraneous catalytic core and F(0) containing the membrane proton channel, linked together by a central stalk and a peripheral stalk. During catalysis, ATP synthesis in the catalytic domain of F(1) is coupled via a rotary mechanism of the central stalk subunits to proton translocation. Its function is as follows. Component of the F(0) channel, it forms part of the peripheral stalk, linking F(1) to F(0). This chain is ATP synthase subunit b 1, found in Maricaulis maris (strain MCS10) (Caulobacter maris).